The primary structure comprises 353 residues: Putative glutamine synthetase (353 aa).

The 84-residue stretch at 19–102 folds into the GS beta-grasp domain; sequence SIIEYVWIGG…VICDTYDVNG (84 aa). Residues 109–353 enclose the GS catalytic domain; that stretch reads HRHNANIIFE…IILQTVCESD (245 aa).

It belongs to the glutamine synthetase family.

It carries out the reaction L-glutamate + NH4(+) + ATP = L-glutamine + ADP + phosphate + H(+). The chain is Putative glutamine synthetase from Acanthamoeba polyphaga (Amoeba).